A 21-amino-acid polypeptide reads, in one-letter code: Maculatin-1.1 (21 aa).

The residue at position 21 (Phe21) is a Phenylalanine amide.

In terms of tissue distribution, expressed by the skin dorsal glands.

It is found in the secreted. Functionally, maculatin-1.1 shows significant antibacterial activity against Gram-positive bacteria, less against Gram-negative bacteria. Maculatin-1.1.1 is inactive. The polypeptide is Maculatin-1.1 (Ranoidea genimaculata (Brown-spotted tree frog)).